Here is a 341-residue protein sequence, read N- to C-terminus: uncharacterized protein (341 aa).

Residues 315–337 (VAAWFSGIAGGTFLALKLVSLMM) form a helical membrane-spanning segment.

It is found in the cell membrane. This is an uncharacterized protein from Bacillus subtilis (strain 168).